The following is a 670-amino-acid chain: Transcription factor vib-1 (670 aa).

Residues 106 to 341 (TEMVQDLRDD…RSPRNFQARK (236 aa)) constitute a DNA-binding region (NDT80). Polar residues-rich tracts occupy residues 394–438 (FTSA…TTSM) and 553–568 (LGNSSSDISPQSQHHP). Disordered regions lie at residues 394-457 (FTSA…SYTA) and 496-670 (SAPP…WNAT). The span at 592-605 (ASAPASAPTSAAPP) shows a compositional bias: low complexity. Polar residues predominate over residues 611-631 (PSQSWTSTAGEGQTSSYTNGG).

The protein localises to the nucleus. It localises to the cytoplasm. Its function is as follows. Transcription factor that acts as a positive regulator of nonrepressible acid phosphatase activity. Is a major regulator of responses to nitrogen and carbon starvation and is essential for the expression of genes involved in vegetative incompatibility (like pin-c, het-6, and tol). Vegetative incompatibility is a non-self-recognition system ubiquitous in filamentous fungi which results in programmed cell death. This is Transcription factor vib-1 (vib-1) from Neurospora crassa (strain ATCC 24698 / 74-OR23-1A / CBS 708.71 / DSM 1257 / FGSC 987).